The primary structure comprises 641 residues: Chaperone protein HtpG (641 aa).

Positions 1–348 (MTTATEKQTL…SNDLSLNVSR (348 aa)) are a; substrate-binding. Residues 349–565 (EILQNDKAVE…AYDMGVQMRR (217 aa)) form a b region. A c region spans residues 566-641 (IMEAAGQALP…KLLLELSNAG (76 aa)).

It belongs to the heat shock protein 90 family. In terms of assembly, homodimer.

Its subcellular location is the cytoplasm. Its function is as follows. Molecular chaperone. Has ATPase activity. The chain is Chaperone protein HtpG from Hahella chejuensis (strain KCTC 2396).